Consider the following 37-residue polypeptide: Cytochrome b6-f complex subunit 7 (37 aa).

The helical transmembrane segment at 5–25 threads the bilayer; sequence IFGTAFLFIVLVPVGLALGAF.

Belongs to the PetM family. As to quaternary structure, the 4 large subunits of the cytochrome b6-f complex are cytochrome b6, subunit IV (17 kDa polypeptide, PetD), cytochrome f and the Rieske protein, while the 4 small subunits are PetG, PetL, PetM and PetN. The complex functions as a dimer.

It is found in the cellular thylakoid membrane. Functionally, component of the cytochrome b6-f complex, which mediates electron transfer between photosystem II (PSII) and photosystem I (PSI), cyclic electron flow around PSI, and state transitions. The chain is Cytochrome b6-f complex subunit 7 from Synechococcus elongatus (strain ATCC 33912 / PCC 7942 / FACHB-805) (Anacystis nidulans R2).